Consider the following 600-residue polypeptide: Zinc metalloproteinase-disintegrin-like cobrin (600 aa).

Residues 1–8 form the signal peptide; the sequence is MIQLSWSS. Positions 9–179 are excised as a propeptide; that stretch reads IILESGNVND…DEPIKKTSLL (171 aa). In terms of domain architecture, Peptidase M12B spans 193 to 388; it reads KYIEFYMVVD…DRPQCILNKP (196 aa). Residues Glu196 and Asp280 each contribute to the Ca(2+) site. Intrachain disulfides connect Cys304–Cys383, Cys344–Cys367, and Cys346–Cys351. Zn(2+) contacts are provided by His329, His333, and His339. Ca(2+)-binding residues include Cys383, Asn386, Ile398, Asn401, Phe403, Glu405, Glu408, and Asp411. Residues 396–482 enclose the Disintegrin domain; it reads PPICGNYFVE…ECPTDVFQRN (87 aa). Disulfide bonds link Cys399–Cys428, Cys410–Cys423, Cys412–Cys418, Cys422–Cys445, Cys436–Cys442, Cys441–Cys467, Cys454–Cys474, Cys461–Cys492, Cys486–Cys497, Cys504–Cys554, Cys519–Cys562, Cys532–Cys542, Cys549–Cys588, and Cys582–Cys593. A glycan (N-linked (GlcNAc...) asparagine) is linked at Asn424. Positions 460-462 match the D/ECD-tripeptide motif; that stretch reads DCD. Residues Asp462, Leu463, Glu465, Asp477, and Val478 each contribute to the Ca(2+) site.

The protein belongs to the venom metalloproteinase (M12B) family. P-III subfamily. P-IIIa sub-subfamily. In terms of assembly, monomer. Zn(2+) is required as a cofactor. Expressed by the venom gland.

The protein resides in the secreted. Snake venom zinc metalloproteinase that may cleave complement protein C3 into C3c-like (C3o). The chain is Zinc metalloproteinase-disintegrin-like cobrin from Naja kaouthia (Monocled cobra).